We begin with the raw amino-acid sequence, 684 residues long: Calpain-14 (684 aa).

Residues 43 to 336 (LFEDTSFPAT…FVLLVICKLT (294 aa)) enclose the Calpain catalytic domain. Catalysis depends on residues Cys-101, His-254, and Asn-278. The tract at residues 337–503 (PGLLSQEAAQ…KHIFYEIGSN (167 aa)) is domain III. Residues 504–517 (SGVVFSKEIEDQNE) form a linker region. The segment at 518–683 (RQDEFFTKFF…KPEWMMMALY (166 aa)) is domain IV. EF-hand domains lie at 557–592 (FSLE…LKLS), 586–621 (WKQL…AGIM), and 651–684 (LRVE…ALYS). Ca(2+)-binding residues include Asp-570, Asn-572, Ser-574, Thr-576, and Glu-581.

The protein belongs to the peptidase C2 family. As to expression, not expressed in tissues tested.

Its function is as follows. Calcium-regulated non-lysosomal thiol-protease. In Homo sapiens (Human), this protein is Calpain-14 (CAPN14).